A 489-amino-acid chain; its full sequence is Cytochrome P450 2C70 (489 aa).

A signal peptide spans 1–27 (MALFIFLGIWLSCLVFLFLWNQHHVRR). Heme is bound at residue Cys434.

This sequence belongs to the cytochrome P450 family. Heme serves as cofactor.

The protein localises to the endoplasmic reticulum membrane. It is found in the microsome membrane. The catalysed reaction is chenodeoxycholate + reduced [NADPH--hemoprotein reductase] + O2 = alpha-muricholate + oxidized [NADPH--hemoprotein reductase] + H2O + H(+). The enzyme catalyses ursodeoxycholate + reduced [NADPH--hemoprotein reductase] + O2 = beta-muricholate + oxidized [NADPH--hemoprotein reductase] + H2O + H(+). Functionally, a cytochrome P450 monooxygenase involved in muricholic acid (MCA) synthesis. Hydroxylates at the 6-beta position two major bile acids, chenodeoxycholic acid (CDCA) and ursodeoxycholic acid (UDCA) to form alpha-MCA and beta-MCA, respectively. May regulate NR1H4/farnesoid X receptor signaling, as taurine-conjugated MCAs are antagonists of NR1H4. Mechanistically, uses molecular oxygen inserting one oxygen atom into a substrate, and reducing the second into a water molecule, with two electrons provided by NADPH via cytochrome P450 reductase (CPR; NADPH-ferrihemoprotein reductase). This chain is Cytochrome P450 2C70, found in Rattus norvegicus (Rat).